The chain runs to 831 residues: MPSHSRSRDRYRSERDPSRRYREVYDDDDDDDFDYHPRERRRYRRDDYQHDIRSHESPNYNDDLNEYDAAAEDPAVPLRSHDVEGRRRERSRAGESPIASPSRRDRNRGGEEYRRHGTYGDGGSPTRAMRDRRHRSRDGQRARPRDMDREARRQRRRERARGAAAMKHKSSDSTNSGSHLLSADALAKLRSHYDEEDQRERSQEQEQPRMESKRQRKRPIVGDEPQALAPFPDETPRGQSKGRIVSGAYLEEGHPEMEVRHRGGGGPAMEARWRKEGNWDGTMEGSDAQPPFWKRKKWWIVIGVLVVVLAIVIPVAVVMSKKHGHDDDKSGSSSSVDNSDSPYISSLDGLSHDSIPESAQGSILDPWTWYDTRDFNLTFTNETVGGLPIMGLNSTWDDSTRPNDNVPPLNESFPYGSQPIRGVNLGGWLSIEPFIVPSLFENYSSKDRIIDEYTLCKKLGSSAASTIEKHYADFISEQDFIDMRDAGLDHVRIQFSYWAVTTYDDDPYVAKISWRYLLRAIEYCRKYGLRVNLDPHGIPGSQNGWNHSGREGVIGWLNGTDGQLNRQRSLDFHNQISQFFAQPRYKNVVTIYGLVNEPLMLSLPVEDVLNWTTDATKLVQKNGISAYVTVHDGFLNLSKWKQMLKDRPDRMFLDTHQYTIFNTGQIVLNHTDRVKLICNDWYNMIKEINTTSAGWGPTICGEWSQADTDCAQYLNNVGRGTRWEGTFAIGDSTVYCPTADTGPTCSCASANAPPADYSDGYKKFLQTYAEAQMSAFGTAQGWFYWTWHTESAAQWSYKTAWKNGYMPKKAYAPDFKCGDDIPSFGDLPEYY.

Composition is skewed to basic and acidic residues over residues 1 to 24 (MPSHSRSRDRYRSERDPSRRYREV), 44 to 56 (RRDDYQHDIRSHE), 79 to 93 (RSHDVEGRRRERSRA), 102 to 115 (SRRDRNRGGEEYRR), 137 to 151 (RDGQRARPRDMDREA), and 198 to 213 (QRERSQEQEQPRMESK). Disordered regions lie at residues 1-179 (MPSH…SGSH) and 192-241 (HYDE…GQSK). The Cytoplasmic segment spans residues 1–297 (MPSHSRSRDR…AQPPFWKRKK (297 aa)). A helical; Signal-anchor for type II membrane protein membrane pass occupies residues 298–318 (WWIVIGVLVVVLAIVIPVAVV). Topologically, residues 319 to 831 (MSKKHGHDDD…PSFGDLPEYY (513 aa)) are extracellular. Residues Asn376, Asn381, Asn393, Asn410, Asn442, Asn546, and Asn558 are each glycosylated (N-linked (GlcNAc...) asparagine). The Proton donor role is filled by Glu597. Asn610, Asn636, Asn669, and Asn689 each carry an N-linked (GlcNAc...) asparagine glycan. The Nucleophile role is filled by Glu702.

It belongs to the glycosyl hydrolase 5 (cellulase A) family.

Its subcellular location is the cell membrane. The enzyme catalyses Successive hydrolysis of beta-D-glucose units from the non-reducing ends of (1-&gt;3)-beta-D-glucans, releasing alpha-glucose.. Functionally, glucosidase involved in the degradation of cellulosic biomass. Active on lichenan. This is Probable glucan 1,3-beta-glucosidase D (exgD) from Aspergillus oryzae (strain ATCC 42149 / RIB 40) (Yellow koji mold).